Here is a 241-residue protein sequence, read N- to C-terminus: 3-oxoacyl-[acyl-carrier-protein] reductase FabG (241 aa).

Residues 13-16, Ser38, 57-58, and Asn83 each bind NADP(+); these read GASS and EV. A substrate-binding site is contributed by Ser135. The Proton acceptor role is filled by Tyr148. NADP(+) is bound by residues 148–152 and Ile181; that span reads YCASK.

It belongs to the short-chain dehydrogenases/reductases (SDR) family. Homotetramer.

It catalyses the reaction a (3R)-hydroxyacyl-[ACP] + NADP(+) = a 3-oxoacyl-[ACP] + NADPH + H(+). It participates in lipid metabolism; fatty acid biosynthesis. Catalyzes the NADPH-dependent reduction of beta-ketoacyl-ACP substrates to beta-hydroxyacyl-ACP products, the first reductive step in the elongation cycle of fatty acid biosynthesis. The sequence is that of 3-oxoacyl-[acyl-carrier-protein] reductase FabG (fabG) from Rickettsia prowazekii (strain Madrid E).